The sequence spans 290 residues: Serpentine receptor class U-26 (290 aa).

The next 7 membrane-spanning stretches (helical) occupy residues 31-51 (LPML…IIIL), 70-90 (LLSA…ADFL), 112-134 (FITI…PFLV), 158-178 (FSIP…FPAI), 185-205 (AYPF…FGLV), 213-233 (NTLF…LLLI), and 262-282 (MIFS…LHIV).

The protein belongs to the nematode receptor-like protein sru family.

It is found in the membrane. The polypeptide is Serpentine receptor class U-26 (sru-26) (Caenorhabditis elegans).